The following is a 265-amino-acid chain: Probable aquaporin TIP3-2 (265 aa).

A run of 2 helical transmembrane segments spans residues 32-52 (LSEFVATAVFVFAAEGSVYGL) and 62-82 (LGGLLVVAVAHALALAAAVAV). Residues 92–94 (NPA) carry the NPA 1 motif. The next 3 membrane-spanning stretches (helical) occupy residues 110-130 (AALYWAAQLLGAVLAVLLLRL), 151-171 (ALLLEVVMTFGLVYTVYATAV), and 179-199 (DIAPLAIGLVAGANILAGGPF). The short motif at 205-207 (NPA) is the NPA 2 element. A helical membrane pass occupies residues 223 to 243 (WVYWLGPLIGAGMAGALYEFV).

This sequence belongs to the MIP/aquaporin (TC 1.A.8) family. TIP (TC 1.A.8.10) subfamily. As to expression, expressed in leaves and at lower levels in roots.

The protein localises to the vacuole membrane. Aquaporins facilitate the transport of water and small neutral solutes across cell membranes. May be involved in transport from the vacuolar compartment to the cytoplasm. The polypeptide is Probable aquaporin TIP3-2 (TIP3-2) (Oryza sativa subsp. japonica (Rice)).